A 186-amino-acid polypeptide reads, in one-letter code: Large ribosomal subunit protein uL10 (186 aa).

This sequence belongs to the universal ribosomal protein uL10 family. In terms of assembly, part of the ribosomal stalk of the 50S ribosomal subunit. The N-terminus interacts with L11 and the large rRNA to form the base of the stalk. The C-terminus forms an elongated spine to which L12 dimers bind in a sequential fashion forming a multimeric L10(L12)X complex.

In terms of biological role, forms part of the ribosomal stalk, playing a central role in the interaction of the ribosome with GTP-bound translation factors. The protein is Large ribosomal subunit protein uL10 of Nitrosococcus oceani (strain ATCC 19707 / BCRC 17464 / JCM 30415 / NCIMB 11848 / C-107).